We begin with the raw amino-acid sequence, 600 residues long: ATP-dependent RNA helicase DDX55 (600 aa).

The short motif at 9-37 (WESLPVPLHPQVLGALRELGFPYMTPVQS) is the Q motif element. Residues 40–223 (IPLFMRNKDV…RAGLRNPVRV (184 aa)) enclose the Helicase ATP-binding domain. 53 to 60 (AVTGSGKT) provides a ligand contact to ATP. The DEAD box motif lies at 171–174 (DEAD). The 149-residue stretch at 254-402 (KFNQLVHFLR…EMKPQRNTAD (149 aa)) folds into the Helicase C-terminal domain. Basic and acidic residues predominate over residues 500–513 (EQQRREKTENEGRR). Residues 500-550 (EQQRREKTENEGRRKFIKNKAWSKQKAKKEKKKKMNEKRKREEGSDIEDED) form a disordered region. Over residues 514–537 (KFIKNKAWSKQKAKKEKKKKMNEK) the composition is skewed to basic residues. Residues 533-562 (KMNEKRKREEGSDIEDEDMEELLNDTRLLK) form an important for nuclear localization region. Phosphoserine is present on residues Ser544 and Ser594.

This sequence belongs to the DEAD box helicase family. DDX55/SPB4 subfamily. In terms of assembly, interacts with 28S rRNA. Interacts with double-stranded RNA substrates in vitro; the interaction stimulates ATPase activity.

Its subcellular location is the nucleus. The protein localises to the nucleoplasm. It carries out the reaction ATP + H2O = ADP + phosphate + H(+). In terms of biological role, probable ATP-binding RNA helicase. Has ATPase activity and is involved in the maturation of precursor large subunit rRNAs. The polypeptide is ATP-dependent RNA helicase DDX55 (Homo sapiens (Human)).